Reading from the N-terminus, the 200-residue chain is Ankyrin repeat-containing protein YAR1 (200 aa).

ANK repeat units follow at residues 49 to 78 (SDST…RANS) and 92 to 121 (TGNT…ADPF). Serine 78 is modified (phosphoserine). The segment at 152 to 173 (VEPEDDEEDTQTEGKNSVQITK) is disordered. Over residues 153–162 (EPEDDEEDTQ) the composition is skewed to acidic residues. Residues 164–173 (EGKNSVQITK) show a composition bias toward polar residues.

In terms of biological role, required for normal rate of cell proliferation. This chain is Ankyrin repeat-containing protein YAR1 (YAR1), found in Saccharomyces cerevisiae (strain ATCC 204508 / S288c) (Baker's yeast).